The following is a 226-amino-acid chain: MREPLDPLGPALAQASLYLCTDARRERGDLAEFADAALAGGVDLIQLRDKGSAGERRFGPLEAREELAALEILAEAARRHGALLAVNDRADIALAAGADVLHLGQDDLPLPVARRIIGPSPLIGRSTHDSAQVAAAVAEEVDYFCVGPCWPTPTKPGREAPGLGLVREVASRATEKPWFAIGGIDEARLPEVLDAGARRIVVVRAITAADDPKAAARRLKDALVSR.

Residues 46-50 (QLRDK) and N87 contribute to the 4-amino-2-methyl-5-(diphosphooxymethyl)pyrimidine site. Positions 88 and 107 each coordinate Mg(2+). S126 provides a ligand contact to 4-amino-2-methyl-5-(diphosphooxymethyl)pyrimidine. 152–154 (TPT) is a 2-[(2R,5Z)-2-carboxy-4-methylthiazol-5(2H)-ylidene]ethyl phosphate binding site. K155 contributes to the 4-amino-2-methyl-5-(diphosphooxymethyl)pyrimidine binding site. G183 is a binding site for 2-[(2R,5Z)-2-carboxy-4-methylthiazol-5(2H)-ylidene]ethyl phosphate.

The protein belongs to the thiamine-phosphate synthase family. Mg(2+) is required as a cofactor.

The catalysed reaction is 2-[(2R,5Z)-2-carboxy-4-methylthiazol-5(2H)-ylidene]ethyl phosphate + 4-amino-2-methyl-5-(diphosphooxymethyl)pyrimidine + 2 H(+) = thiamine phosphate + CO2 + diphosphate. It catalyses the reaction 2-(2-carboxy-4-methylthiazol-5-yl)ethyl phosphate + 4-amino-2-methyl-5-(diphosphooxymethyl)pyrimidine + 2 H(+) = thiamine phosphate + CO2 + diphosphate. The enzyme catalyses 4-methyl-5-(2-phosphooxyethyl)-thiazole + 4-amino-2-methyl-5-(diphosphooxymethyl)pyrimidine + H(+) = thiamine phosphate + diphosphate. The protein operates within cofactor biosynthesis; thiamine diphosphate biosynthesis; thiamine phosphate from 4-amino-2-methyl-5-diphosphomethylpyrimidine and 4-methyl-5-(2-phosphoethyl)-thiazole: step 1/1. In terms of biological role, condenses 4-methyl-5-(beta-hydroxyethyl)thiazole monophosphate (THZ-P) and 2-methyl-4-amino-5-hydroxymethyl pyrimidine pyrophosphate (HMP-PP) to form thiamine monophosphate (TMP). The protein is Thiamine-phosphate synthase of Mycobacterium sp. (strain KMS).